A 129-amino-acid polypeptide reads, in one-letter code: Trefoil factor 2 (129 aa).

Positions 1–23 are cleaved as a signal peptide; it reads MGPRGLQLLAVLLALGLCAPAGA. Q24 is subject to Pyrrolidone carboxylic acid. 2 consecutive P-type domains span residues 29–73 and 79–122; these read CQCS…FHPL and EQCV…FFPI. Disulfide bonds link C29/C127, C31/C58, C42/C57, C52/C69, C81/C107, C91/C106, and C101/C118.

The protein localises to the secreted. In terms of biological role, inhibits gastrointestinal motility and gastric acid secretion. Could function as a structural component of gastric mucus, possibly by stabilizing glycoproteins in the mucus gel through interactions with carbohydrate side chains. In Canis lupus familiaris (Dog), this protein is Trefoil factor 2 (TFF2).